Consider the following 469-residue polypeptide: 6-phosphofructo-2-kinase/fructose-2,6-bisphosphatase 4 (469 aa).

Positions 1 to 249 are 6-phosphofructo-2-kinase; sequence MASPRELTQN…YYLMNIHVTP (249 aa). Position 29 is a phosphoserine; by PKC (Ser29). Residue 46 to 54 coordinates ATP; the sequence is GLPARGKTY. Beta-D-fructose 6-phosphate-binding residues include Arg79 and Arg103. Asp129 is a catalytic residue. Residues Thr131 and Arg137 each coordinate beta-D-fructose 6-phosphate. Cys159 is a catalytic residue. 168 to 173 serves as a coordination point for ATP; the sequence is NIVQVK. The beta-D-fructose 6-phosphate site is built by Lys173, Arg194, and Tyr198. A fructose-2,6-bisphosphatase region spans residues 250–469; it reads RSIYLCRHGE…EALVTVPAHQ (220 aa). Arg256 contributes to the beta-D-fructose 2,6-bisphosphate binding site. Residue His257 is the Tele-phosphohistidine intermediate of the active site. The beta-D-fructose 2,6-bisphosphate site is built by Asn263, Gly269, and Arg306. The active-site Proton donor/acceptor is Glu326. 6 residues coordinate beta-D-fructose 2,6-bisphosphate: Tyr337, Arg351, Lys355, Tyr366, Gln392, and Arg396. Position 348–351 (348–351) interacts with ATP; sequence FALR. ATP is bound by residues 392–396 and Tyr428; that span reads QAVMR. Thr444 carries the phosphothreonine; by PKC modification.

The protein in the C-terminal section; belongs to the phosphoglycerate mutase family. In terms of assembly, homodimer. As to expression, testis.

The catalysed reaction is beta-D-fructose 2,6-bisphosphate + H2O = beta-D-fructose 6-phosphate + phosphate. It catalyses the reaction beta-D-fructose 6-phosphate + ATP = beta-D-fructose 2,6-bisphosphate + ADP + H(+). Its activity is regulated as follows. The most important regulatory mechanism of these opposing activities is by phosphorylation and dephosphorylation of the enzyme. In terms of biological role, synthesis and degradation of fructose 2,6-bisphosphate. This is 6-phosphofructo-2-kinase/fructose-2,6-bisphosphatase 4 (Pfkfb4) from Rattus norvegicus (Rat).